Here is a 305-residue protein sequence, read N- to C-terminus: MNFRRLKYFVKIVDIGSLTQAAEVLHIAQPALSQQVATLEGELNQQLLIRTKRGVTPTDAGKILYTHARAILRQCEQAQLAVHNVGQALSGQVSIGFAPGTAASSITMPLLQAVRAEFPEIVIYLHENSGAVLNEKLINHQLDMAVIYEHSPVAGVSSQALLKEDLFLVGTQDCPGQSVDVNAIAQMNLFLPSDYSAIRLRVDEAFSLRRLTAKVIGEIESIATLTAAIASGMGVAVLPESAARSLCGAVNGWMSRITTPSMSLSLSLNLPARANLSPQAQAVKELLMSVISSPVMEKRQWQLVS.

Residues 1-58 enclose the HTH lysR-type domain; that stretch reads MNFRRLKYFVKIVDIGSLTQAAEVLHIAQPALSQQVATLEGELNQQLLIRTKRGVTPT. The H-T-H motif DNA-binding region spans 18–37; sequence LTQAAEVLHIAQPALSQQVA.

It belongs to the LysR transcriptional regulatory family.

Functionally, transcriptional activator for the hut, put and ure operons and repressor for the gdh and gltB operons in response to nitrogen limitation. Negative regulator of its own expression. The sequence is that of Nitrogen assimilation regulatory protein nac (nac) from Escherichia coli (strain K12).